The chain runs to 487 residues: Glutamyl-tRNA(Gln) amidotransferase subunit A (487 aa).

Catalysis depends on charge relay system residues K77 and S152. S176 acts as the Acyl-ester intermediate in catalysis.

The protein belongs to the amidase family. GatA subfamily. As to quaternary structure, heterotrimer of A, B and C subunits.

The catalysed reaction is L-glutamyl-tRNA(Gln) + L-glutamine + ATP + H2O = L-glutaminyl-tRNA(Gln) + L-glutamate + ADP + phosphate + H(+). Allows the formation of correctly charged Gln-tRNA(Gln) through the transamidation of misacylated Glu-tRNA(Gln) in organisms which lack glutaminyl-tRNA synthetase. The reaction takes place in the presence of glutamine and ATP through an activated gamma-phospho-Glu-tRNA(Gln). This Lactiplantibacillus plantarum (strain ATCC BAA-793 / NCIMB 8826 / WCFS1) (Lactobacillus plantarum) protein is Glutamyl-tRNA(Gln) amidotransferase subunit A.